The chain runs to 278 residues: Tetraspanin-13 (278 aa).

Over 1–25 (MARDKEDQNNENPSIVQNMSFPFNT) the chain is Cytoplasmic. A helical transmembrane segment spans residues 26-46 (IFLISSAIFLVTAAFWFVAVM). Topologically, residues 47–62 (TLHYRTDECNRFVTTP) are extracellular. Residues 63–83 (GIFISFSLLAMSLTGFYAAYF) form a helical membrane-spanning segment. Residues 84–92 (KSDCLFRIH) lie on the Cytoplasmic side of the membrane. A helical transmembrane segment spans residues 93–113 (FFIFFLWMFVVVSKAIFVIFL). Residues 114–249 (HKETNPRLFP…DVHNTSFSIT (136 aa)) lie on the Extracellular side of the membrane. Residues N202, N220, and N243 are each glycosylated (N-linked (GlcNAc...) asparagine). A helical transmembrane segment spans residues 250 to 270 (VNIIHIIFSLCIGMTGWFAWL). At 271–278 (RILRESQK) the chain is on the cytoplasmic side.

This sequence belongs to the tetraspanin (TM4SF) family.

It localises to the membrane. Functionally, may be involved in the regulation of cell differentiation. This Arabidopsis thaliana (Mouse-ear cress) protein is Tetraspanin-13 (TET13).